The chain runs to 412 residues: Glutamate-1-semialdehyde 2,1-aminomutase (412 aa).

Position 260 is an N6-(pyridoxal phosphate)lysine (Lys260).

It belongs to the class-III pyridoxal-phosphate-dependent aminotransferase family. HemL subfamily. Requires pyridoxal 5'-phosphate as cofactor.

Its subcellular location is the cytoplasm. It catalyses the reaction (S)-4-amino-5-oxopentanoate = 5-aminolevulinate. Its pathway is porphyrin-containing compound metabolism; protoporphyrin-IX biosynthesis; 5-aminolevulinate from L-glutamyl-tRNA(Glu): step 2/2. The sequence is that of Glutamate-1-semialdehyde 2,1-aminomutase from Methanocorpusculum labreanum (strain ATCC 43576 / DSM 4855 / Z).